The sequence spans 258 residues: Protein OS-9 homolog (258 aa).

Positions 1–18 are cleaved as a signal peptide; the sequence is MNWTSLVYLWFIFKSIFA. Residues Asn2, Asn51, and Asn70 are each glycosylated (N-linked (GlcNAc...) asparagine). Residues 114-237 form the MRH domain; the sequence is TSCVFSFNLH…HINVPKLCSL (124 aa). The cysteines at positions 116 and 132 are disulfide-linked. 2 residues coordinate a mannooligosaccharide derivative: Trp127 and Gln139. Asn165 is a glycosylation site (N-linked (GlcNAc...) asparagine). Disulfide bonds link Cys193/Cys223 and Cys208/Cys235. Asp194, Arg200, Glu219, and Tyr225 together coordinate a mannooligosaccharide derivative.

Belongs to the OS-9 family. Interacts with missfolded ER lumenal proteins.

It is found in the endoplasmic reticulum membrane. In terms of biological role, lectin involved in the quality control of the secretory pathway. As a member of the endoplasmic reticulum-associated degradation lumenal (ERAD-L) surveillance system, targets misfolded endoplasmic reticulum lumenal glycoproteins for degradation. The polypeptide is Protein OS-9 homolog (YOS9) (Candida albicans (strain SC5314 / ATCC MYA-2876) (Yeast)).